Reading from the N-terminus, the 460-residue chain is UDP-N-acetylmuramoylalanine--D-glutamate ligase (460 aa).

Gly120–Thr126 provides a ligand contact to ATP.

Belongs to the MurCDEF family.

The protein resides in the cytoplasm. It catalyses the reaction UDP-N-acetyl-alpha-D-muramoyl-L-alanine + D-glutamate + ATP = UDP-N-acetyl-alpha-D-muramoyl-L-alanyl-D-glutamate + ADP + phosphate + H(+). It functions in the pathway cell wall biogenesis; peptidoglycan biosynthesis. In terms of biological role, cell wall formation. Catalyzes the addition of glutamate to the nucleotide precursor UDP-N-acetylmuramoyl-L-alanine (UMA). The sequence is that of UDP-N-acetylmuramoylalanine--D-glutamate ligase from Lactobacillus johnsonii (strain CNCM I-12250 / La1 / NCC 533).